The chain runs to 218 residues: Pyridoxine/pyridoxamine 5'-phosphate oxidase (218 aa).

Residues 14 to 17 and lysine 72 each bind substrate; that span reads RREY. Residues 67–72, 82–83, arginine 88, lysine 89, and glutamine 111 each bind FMN; these read RIVLLK and YT. Tyrosine 129, arginine 133, and serine 137 together coordinate substrate. Residues 146 to 147 and tryptophan 191 each bind FMN; that span reads QS. Residue 197-199 coordinates substrate; sequence RLH. Arginine 201 lines the FMN pocket.

This sequence belongs to the pyridoxamine 5'-phosphate oxidase family. Homodimer. FMN is required as a cofactor.

The enzyme catalyses pyridoxamine 5'-phosphate + O2 + H2O = pyridoxal 5'-phosphate + H2O2 + NH4(+). The catalysed reaction is pyridoxine 5'-phosphate + O2 = pyridoxal 5'-phosphate + H2O2. Its pathway is cofactor metabolism; pyridoxal 5'-phosphate salvage; pyridoxal 5'-phosphate from pyridoxamine 5'-phosphate: step 1/1. It participates in cofactor metabolism; pyridoxal 5'-phosphate salvage; pyridoxal 5'-phosphate from pyridoxine 5'-phosphate: step 1/1. In terms of biological role, catalyzes the oxidation of either pyridoxine 5'-phosphate (PNP) or pyridoxamine 5'-phosphate (PMP) into pyridoxal 5'-phosphate (PLP). The protein is Pyridoxine/pyridoxamine 5'-phosphate oxidase of Escherichia coli (strain SMS-3-5 / SECEC).